The sequence spans 39 residues: U2-ctenitoxin-Co1a (39 aa).

Post-translationally, disulfide bonds are present. Expressed by the venom gland.

It is found in the secreted. Functionally, omega-agatoxins are antagonists of voltage-gated calcium channels (Cav). The chain is U2-ctenitoxin-Co1a from Ctenus ornatus (Brazilian spider).